Consider the following 152-residue polypeptide: UPF0178 protein YaiI (152 aa).

It belongs to the UPF0178 family.

This is UPF0178 protein YaiI from Shigella boydii serotype 18 (strain CDC 3083-94 / BS512).